The following is a 249-amino-acid chain: 3-deoxy-manno-octulosonate cytidylyltransferase (249 aa).

This sequence belongs to the KdsB family.

Its subcellular location is the cytoplasm. The catalysed reaction is 3-deoxy-alpha-D-manno-oct-2-ulosonate + CTP = CMP-3-deoxy-beta-D-manno-octulosonate + diphosphate. The protein operates within nucleotide-sugar biosynthesis; CMP-3-deoxy-D-manno-octulosonate biosynthesis; CMP-3-deoxy-D-manno-octulosonate from 3-deoxy-D-manno-octulosonate and CTP: step 1/1. Its pathway is bacterial outer membrane biogenesis; lipopolysaccharide biosynthesis. Functionally, activates KDO (a required 8-carbon sugar) for incorporation into bacterial lipopolysaccharide in Gram-negative bacteria. The sequence is that of 3-deoxy-manno-octulosonate cytidylyltransferase from Photorhabdus laumondii subsp. laumondii (strain DSM 15139 / CIP 105565 / TT01) (Photorhabdus luminescens subsp. laumondii).